Consider the following 442-residue polypeptide: tRNA modification GTPase MnmE (442 aa).

Arg-24, Glu-82, and Lys-120 together coordinate (6S)-5-formyl-5,6,7,8-tetrahydrofolate. In terms of domain architecture, TrmE-type G spans 217–367; it reads GLHIVITGEP…LISLIKKKAE (151 aa). GTP-binding positions include 227 to 232, 246 to 252, and 271 to 274; these read NVGKST, SEYAGTT, and DTAG. Residue Ser-231 participates in Mg(2+) binding. Ser-246 is a K(+) binding site. Thr-252 serves as a coordination point for Mg(2+). Lys-442 is a binding site for (6S)-5-formyl-5,6,7,8-tetrahydrofolate.

It belongs to the TRAFAC class TrmE-Era-EngA-EngB-Septin-like GTPase superfamily. TrmE GTPase family. As to quaternary structure, homodimer. Heterotetramer of two MnmE and two MnmG subunits. The cofactor is K(+).

It localises to the cytoplasm. Exhibits a very high intrinsic GTPase hydrolysis rate. Involved in the addition of a carboxymethylaminomethyl (cmnm) group at the wobble position (U34) of certain tRNAs, forming tRNA-cmnm(5)s(2)U34. In Wolbachia pipientis subsp. Culex pipiens (strain wPip), this protein is tRNA modification GTPase MnmE.